The primary structure comprises 155 residues: Protein-export protein SecB (155 aa).

This sequence belongs to the SecB family. In terms of assembly, homotetramer, a dimer of dimers. One homotetramer interacts with 1 SecA dimer.

The protein localises to the cytoplasm. In terms of biological role, one of the proteins required for the normal export of preproteins out of the cell cytoplasm. It is a molecular chaperone that binds to a subset of precursor proteins, maintaining them in a translocation-competent state. It also specifically binds to its receptor SecA. The polypeptide is Protein-export protein SecB (Psychromonas ingrahamii (strain DSM 17664 / CCUG 51855 / 37)).